Here is a 165-residue protein sequence, read N- to C-terminus: Neurotrophin-3 (165 aa).

The N-terminal stretch at 1–3 (IQS) is a signal peptide. Positions 4–119 (TSMDQGSLSE…VLNQTSRRKR (116 aa)) are excised as a propeptide. Residue asparagine 112 is glycosylated (N-linked (GlcNAc...) asparagine).

Belongs to the NGF-beta family.

It localises to the secreted. In terms of biological role, seems to promote the survival of visceral and proprioceptive sensory neurons. In Morelia spilota (Carpet python), this protein is Neurotrophin-3 (NTF3).